The primary structure comprises 592 residues: V-type ATP synthase alpha chain 1 (592 aa).

An ATP-binding site is contributed by 233-240 (GPFGSGKT).

Belongs to the ATPase alpha/beta chains family.

It catalyses the reaction ATP + H2O + 4 H(+)(in) = ADP + phosphate + 5 H(+)(out). Produces ATP from ADP in the presence of a proton gradient across the membrane. The V-type alpha chain is a catalytic subunit. The polypeptide is V-type ATP synthase alpha chain 1 (Clostridium tetani (strain Massachusetts / E88)).